Reading from the N-terminus, the 217-residue chain is Ribosomal RNA small subunit methyltransferase G (217 aa).

Residues Gly79, Leu84, 102 to 104 (DST), 130 to 131 (VE), and Arg144 each bind S-adenosyl-L-methionine.

Belongs to the methyltransferase superfamily. RNA methyltransferase RsmG family.

The protein resides in the cytoplasm. Functionally, specifically methylates the N7 position of a guanine in 16S rRNA. The chain is Ribosomal RNA small subunit methyltransferase G from Chlorobaculum tepidum (strain ATCC 49652 / DSM 12025 / NBRC 103806 / TLS) (Chlorobium tepidum).